The sequence spans 298 residues: (S)-ureidoglycine aminohydrolase (298 aa).

The N-terminal stretch at 1-20 (MRSLYLIVFIVISLVKASKS) is a signal peptide. Residues 222–288 (TMDFQPGEFL…ALGKTRSRYL (67 aa)) enclose the Cupin type-2 domain. Mn(2+) contacts are provided by Glu-235, His-237, His-241, and Gln-275. Glu-235 contacts substrate. The substrate site is built by Gln-275, Tyr-287, and Lys-291.

This sequence belongs to the UGHY family. Homooctamer. Mn(2+) serves as cofactor.

It is found in the endoplasmic reticulum. It catalyses the reaction (S)-2-ureidoglycine + H2O = (S)-ureidoglycolate + NH4(+). In terms of biological role, involved in the catabolism of purine nucleotides. Can use (S)-2-ureidoglycine as substrate, but not allantoate. The sequential activity of AAH, UGLYAH and UAH allows a complete purine breakdown without the intermediate generation of urea. The polypeptide is (S)-ureidoglycine aminohydrolase (UGLYAH) (Arabidopsis thaliana (Mouse-ear cress)).